The primary structure comprises 177 residues: ECF RNA polymerase sigma factor SigL (177 aa).

Residues leucine 18–arginine 85 are sigma-70 factor domain-2. The Interaction with polymerase core subunit RpoC signature appears at aspartate 42 to glutamine 45. The tract at residues alanine 119–arginine 167 is sigma-70 factor domain-4. The segment at residues threonine 141–histidine 160 is a DNA-binding region (H-T-H motif).

Belongs to the sigma-70 factor family. ECF subfamily. Interacts transiently with the RNA polymerase catalytic core formed by RpoA, RpoB, RpoC and RpoZ (2 alpha, 1 beta, 1 beta' and 1 omega subunit) to form the RNA polymerase holoenzyme that can initiate transcription. Interacts (via sigma-70 factor domain 4) with anti-sigma-L factor RslA.

Its function is as follows. Sigma factors are initiation factors that promote the attachment of RNA polymerase to specific initiation sites and are then released. Extracytoplasmic function (ECF) sigma factors are held in an inactive form by an anti-sigma factor until released by regulated intramembrane proteolysis. The sequence is that of ECF RNA polymerase sigma factor SigL (sigL) from Mycobacterium tuberculosis (strain ATCC 35801 / TMC 107 / Erdman).